Reading from the N-terminus, the 194-residue chain is ATP-dependent Clp protease proteolytic subunit (194 aa).

S98 acts as the Nucleophile in catalysis. H123 is a catalytic residue.

Belongs to the peptidase S14 family. Fourteen ClpP subunits assemble into 2 heptameric rings which stack back to back to give a disk-like structure with a central cavity, resembling the structure of eukaryotic proteasomes.

The protein resides in the cytoplasm. The catalysed reaction is Hydrolysis of proteins to small peptides in the presence of ATP and magnesium. alpha-casein is the usual test substrate. In the absence of ATP, only oligopeptides shorter than five residues are hydrolyzed (such as succinyl-Leu-Tyr-|-NHMec, and Leu-Tyr-Leu-|-Tyr-Trp, in which cleavage of the -Tyr-|-Leu- and -Tyr-|-Trp bonds also occurs).. Functionally, cleaves peptides in various proteins in a process that requires ATP hydrolysis. Has a chymotrypsin-like activity. Plays a major role in the degradation of misfolded proteins. The sequence is that of ATP-dependent Clp protease proteolytic subunit from Alkaliphilus metalliredigens (strain QYMF).